The chain runs to 862 residues: Axin-1 (862 aa).

The tract at residues 1–78 (MNIQEQGFPL…GYEPEGSASP (78 aa)) is disordered. Residues 20 to 29 (APRPPVPGEE) carry the Tankyrase-binding motif motif. Phosphoserine; by CK1 occurs at positions 75 and 77. Positions 88–211 (SLHSLLDDQD…LKSDIYLEYT (124 aa)) constitute an RGS domain. The interval 209–338 (EYTRTGSESP…DADTLSLTDS (130 aa)) is interaction with TP53. 2 disordered regions span residues 215–289 (SESP…YSEG) and 316–344 (TSAN…DGIP). Phosphoserine; by CK1 is present on Ser217. The segment covering 242-258 (NEDEEWKCDQDMDEDDG) has biased composition (acidic residues). Residues 325–339 (SLSSDADTLSLTDSS) are compositionally biased toward low complexity. An interaction with GSK3B region spans residues 348-433 (IRKQHRREMQ…DGDPSSGPPG (86 aa)). The segment at 353–411 (RREMQESVQVNGRVPLPHIPRTYRVPKEVRVEPQKFAEELIHRLEAVQRTREAEEKLEE) is interaction with SIAH1 and SIAH2. Residues 413 to 441 (LKRVRMEEEGEDGDPSSGPPGPCHKLPPA) are disordered. Over residues 429–441 (SGPPGPCHKLPPA) the composition is skewed to pro residues. The tract at residues 434-502 (PCHKLPPAPA…SPDSGHVAKM (69 aa)) is interaction with CTNNB1. Ser469 bears the Phosphoserine; by CK1 mark. A disordered region spans residues 480-500 (RTPGRQSPGPGHRSPDSGHVA). Thr481 bears the Phosphothreonine; by GSK3-beta mark. A phosphoserine mark is found at Ser486, Ser493, and Ser511. Residues 507–757 (GGAASGHGKH…PVLHVVPAVS (251 aa)) form an interaction with RNF111 region. The segment covering 531–544 (HHRHVHHHVHHSTA) has biased composition (basic residues). 2 disordered regions span residues 531–629 (HHRH…AEKN) and 641–679 (KEIS…GPQL). Over residues 545–556 (RPKEQVEAEATR) the composition is skewed to basic and acidic residues. The segment at 575-789 (SRGYSESVGA…CDSIVVAYYF (215 aa)) is interaction with PPP2CA. The residue at position 581 (Ser581) is a Phosphoserine. The interaction with HIPK2 stretch occupies residues 677 to 752 (PQLRTSVQPS…RPACAPVLHV (76 aa)). Positions 780–862 (CDSIVVAYYF…KIIGKVEKVD (83 aa)) constitute a DIX domain. Residues Lys857 and Lys860 each participate in a glycyl lysine isopeptide (Lys-Gly) (interchain with G-Cter in SUMO) cross-link.

As to quaternary structure, homodimer. Interacts with ZBED3; the interaction is direct, enhanced by protein kinase GSK3B and casein kinase CSNK1E activities and decreases GSK3B-induced beta-catenin serine and threonine phosphorylations. Component of the beta-catenin destruction complex, containing at least, CTNNB1, an axin and GSK3B, that regulates CTNNB1 protein levels through phosphorylation and ubiquitination. Interacts with CTNNB1 (via the armadillo repeats 2-7). Interacts with GSK3B; the interaction hyperphosphorylates CTNNB1 leading to its ubiquitination and destruction. Component of the AXIN1-HIPK2-TP53 complex. Interacts directly in the complex with TP53 and HIPK2. Interacts with DAXX; the interaction stimulates the interaction of DAXX with TP53, stimulates 'Ser-46' phosphorylation of TP53 and induces cell death on UV irradiation. Also binds APC, SMAD6, SMAD7 and RNF111. Interacts with DIXDC1; prevents interaction with MAP3K1. Interacts with MAP3K4. Interacts with ANKRD6 and AIDA. Interacts with MDFI; the interaction decreases AXIN1-mediated JUN N-terminal kinase (JNK) activation. Interacts with MDFIC; the interaction inhibits beta-cateninin-mediated signaling and AXIN1-mediated JUN N-terminal kinase (JNK) activation. Interacts with LRP5 (via its phosphorylated PPPSP motifs); the interaction is stimulated by WNT1 and GSK3B and activates beta-catenin signaling. Interacts (via the C-terminal) with PPP1CA; the interaction dephosphorylates AXIN1 and regulates interaction with GSK3B. Interacts with PPP2CA; the interaction dephosphorylates AXIN1. Interacts with MACF1. Found in a complex composed of MACF1, APC, AXIN1, CTNNB1 and GSK3B. Interacts with TNKS. Interacts with DAB2; the interaction is mutually exclusive with the AXIN1:PPP1CA interaction. Interacts with WDR26. Interacts with GID8. Interacts with SIAH1 and SIAH2; both probably catalyze AXIN1 ubiquitination and subsequent proteasome-mediated ubiquitin-dependent degradation. Interaction with GSK3B and AXIN1 is competitive. Phosphorylation and dephosphorylation of AXIN1 regulates assembly and function of the beta-catenin complex. Phosphorylated by CK1 and GSK3B. Dephosphorylated by PPP1CA and PPP2CA. Phosphorylation by CK1 enhances binding of GSK3B to AXIN1. Post-translationally, ADP-ribosylated by tankyrase TNKS and TNKS2. Poly-ADP-ribosylated protein is recognized by RNF146, followed by ubiquitination at 'Lys-48' and subsequent activation of the Wnt signaling pathway. In terms of processing, ubiquitinated by RNF146 when poly-ADP-ribosylated, leading to its degradation and subsequent activation of the Wnt signaling pathway. Sumoylation at Lys-857 and Lys-860 prevents ubiquitination and degradation. Sumoylation is required for AXIN1-mediated JNK activation. Deubiquitinated by USP34, deubiquitinated downstream of beta-catenin stabilization step: deubiquitination is important for nuclear accumulation during Wnt signaling to positively regulate beta-catenin (CTNBB1)-mediated transcription. Ubiquitination by SIAH1 and SIAH2 induces its proteasomal degradation as part of the activation of the Wnt signaling pathway. Ubiquitously expressed.

The protein resides in the cytoplasm. The protein localises to the nucleus. It localises to the membrane. It is found in the cell membrane. In terms of biological role, component of the beta-catenin destruction complex required for regulating CTNNB1 levels through phosphorylation and ubiquitination, and modulating Wnt-signaling. Controls dorsoventral patterning via two opposing effects; down-regulates CTNNB1 to inhibit the Wnt signaling pathway and ventralize embryos, but also dorsalizes embryos by activating a Wnt-independent JNK signaling pathway. In Wnt signaling, probably facilitates the phosphorylation of CTNNB1 and APC by GSK3B. Likely to function as a tumor suppressor. Enhances TGF-beta signaling by recruiting the RNF111 E3 ubiquitin ligase and promoting the degradation of inhibitory SMAD7. Also a component of the AXIN1-HIPK2-TP53 complex which controls cell growth, apoptosis and development. Facilitates the phosphorylation of TP53 by HIPK2 upon ultraviolet irradiation. The protein is Axin-1 (AXIN1) of Homo sapiens (Human).